We begin with the raw amino-acid sequence, 255 residues long: uncharacterized protein (255 aa).

Disordered stretches follow at residues cysteine 112 to glycine 145 and glycine 157 to glutamine 183.

This is an uncharacterized protein from Rhodospirillum rubrum.